The sequence spans 379 residues: MTEPTIHKGLAGVTADVTAISKVNSDTNSLLYRGYPVQELAAKCSFEQVAYLLWNSELPNDSELKAFVNFERSHRKLDENVKGAIDLLSTACHPMDVARTAVSVLGANHARAQDSSPEANLEKAMSLLATFPSVVAYDQRRRRGEELIEPREDLDYSANFLWMTFGEEAAPEVVEAFNVSMILYAEHSFNASTFTARVITSTLADLHSAVTGAIGALKGPLHGGANEAVMHTFEEIGIRKDESLDEAATRSKAWMVDALAQKKKVMGFGHRVYKNGDSRVPTMKSALDAMIKHYDRPEMLGLYNGLEAAMEEAKQIKPNLDYPAGPTYNLMGFDTEMFTPLFIAARITGWTAHIMEQVADNALIRPLSEYNGPEQRQVP.

H187 contributes to the substrate binding site. Residue H222 is part of the active site. Residue 264-268 coordinates CoA; sequence KVMGF. Residue H270 is part of the active site. A substrate-binding site is contributed by R279. Residue D321 is part of the active site. Substrate-binding residues include R346 and R365.

It belongs to the citrate synthase family. Homodimer.

The catalysed reaction is propanoyl-CoA + oxaloacetate + H2O = (2S,3S)-2-methylcitrate + CoA + H(+). It carries out the reaction oxaloacetate + acetyl-CoA + H2O = citrate + CoA + H(+). Its pathway is organic acid metabolism; propanoate degradation. The protein operates within carbohydrate metabolism; tricarboxylic acid cycle; isocitrate from oxaloacetate: step 1/2. Involved in the catabolism of short chain fatty acids (SCFA) via the tricarboxylic acid (TCA)(acetyl degradation route) and via the 2-methylcitrate cycle I (propionate degradation route). Catalyzes the Claisen condensation of propionyl-CoA and oxaloacetate (OAA) to yield 2-methylcitrate (2-MC) and CoA. Also catalyzes the condensation of oxaloacetate with acetyl-CoA but with a lower specificity. This Antarctic bacterium DS2-3R protein is 2-methylcitrate synthase (gltA).